A 371-amino-acid polypeptide reads, in one-letter code: uncharacterized protein (371 aa).

Positions 43-148 constitute an EH domain; it reads DESRVPKFYL…VQAFPTASNP (106 aa). Positions 179–205 are disordered; that stretch reads SMRKKKESDSKEVSAHNSPAKGAAHDL.

This is an uncharacterized protein from Caenorhabditis elegans.